Consider the following 263-residue polypeptide: MTESEVSTPTVAPPVISLADNADTIKLYSKYIVPENTPFKTTDKQTLMDNCAFFAKMFVNLSAMAFSTLEPLDKKETKELSKKEKKQLKKEKKALKKENKGGKDKKDKKDKKDKKDKKDKKDKKDKGDKKDKKEKKEKKHDDDKSEVKEKKEKKEKEDRTIVEIRNTKSILDASSTSVSRFAPCMMFVNCPSGPAGLECRILKDTSIAKLKSEICWNQYLTNLVQCQERGLSKCFSKFVDLQKTCKQTEIPKKSFSLFDSLSY.

Positions 72–168 (LDKKETKELS…RTIVEIRNTK (97 aa)) form a coiled coil. A disordered region spans residues 76–158 (ETKELSKKEK…EKKEKKEKED (83 aa)). Positions 83–95 (KEKKQLKKEKKAL) are enriched in basic residues. The span at 96–107 (KKENKGGKDKKD) shows a compositional bias: basic and acidic residues. A compositionally biased stretch (basic residues) spans 108–121 (KKDKKDKKDKKDKK). Basic and acidic residues-rich tracts occupy residues 122–131 (DKKDKGDKKD) and 139–158 (KHDD…EKED).

This is an uncharacterized protein from Dictyostelium discoideum (Social amoeba).